We begin with the raw amino-acid sequence, 134 residues long: Large ribosomal subunit protein uL22 (134 aa).

It belongs to the universal ribosomal protein uL22 family. In terms of assembly, part of the 50S ribosomal subunit.

In terms of biological role, this protein binds specifically to 23S rRNA; its binding is stimulated by other ribosomal proteins, e.g. L4, L17, and L20. It is important during the early stages of 50S assembly. It makes multiple contacts with different domains of the 23S rRNA in the assembled 50S subunit and ribosome. Functionally, the globular domain of the protein is located near the polypeptide exit tunnel on the outside of the subunit, while an extended beta-hairpin is found that lines the wall of the exit tunnel in the center of the 70S ribosome. In Karelsulcia muelleri (strain GWSS) (Sulcia muelleri), this protein is Large ribosomal subunit protein uL22.